The sequence spans 1239 residues: Codanin-1 (1239 aa).

The residue at position 2 (Ala2) is an N-acetylalanine. Residues 61 to 72 show a composition bias toward polar residues; sequence SRVLPQGPSTPA. Disordered regions lie at residues 61 to 249 and 261 to 299; these read SRVL…PPGC and KART…ADPA. Thr70 is subject to Phosphothreonine. Composition is skewed to low complexity over residues 77–88, 95–116, and 138–179; these read ASAALPARQGAP, ARSQ…PLAR, and GAAE…LSNL. Residues 193–213 form an interaction with ASF1A/B region; that stretch reads AGRTKPSRRINPTPVSEERSL. Over residues 219–238 the composition is skewed to polar residues; it reads CFTSPPISCVPSSQPSTLDT. Position 270 is a phosphoserine (Ser270). The next 2 membrane-spanning stretches (helical) occupy residues 317-337 and 631-651; these read CIAE…LQLL and FAVV…VAFL.

As to quaternary structure, interacts with ASF1A and ASF1B. Found in a cytosolic complex with ASF1A, ASF1B, IPO4 and histones H3.1 and H4. As to expression, widely expressed in adult mice, the highest levels can be measured in erythropoietic cells.

It is found in the cytoplasm. It localises to the nucleus. Its subcellular location is the membrane. May act as a negative regulator of ASF1 in chromatin assembly. The chain is Codanin-1 (Cdan1) from Mus musculus (Mouse).